The chain runs to 914 residues: Protein ECT2 (914 aa).

An N-acetylalanine modification is found at Ala2. BRCT domains follow at residues 171–260 and 266–354; these read LYCT…AAVD and FKVP…MYLY. Thr359 is subject to Phosphothreonine; by PKC/PRKCI. Phosphoserine occurs at positions 367 and 370. Residue Thr373 is modified to Phosphothreonine; by CDK1. Phosphoserine is present on Ser376. Short sequence motifs (nuclear localization signal) lie at residues 378–382 and 401–405; these read RKRRR and PRKRP. Positions 388–449 are disordered; the sequence is AQLSRETDVS…SKSSTPVPSK (62 aa). A compositionally biased stretch (polar residues) spans 418-429; sequence DISNTPESSINY. A compositionally biased stretch (low complexity) spans 432 to 449; the sequence is TPKSCTKSSKSSTPVPSK. Residue Thr444 is modified to Phosphothreonine; by CDK1. Residues 452–641 form the DH domain; it reads ARWQVAKELY…KEVMTHINED (190 aa). Lys611 is covalently cross-linked (Glycyl lysine isopeptide (Lys-Gly) (interchain with G-Cter in SUMO2)). One can recognise a PH domain in the interval 675–794; it reads RVETISLGEH…KMLCRHVANT (120 aa). Phosphoserine is present on residues Ser716 and Ser842. Thr846 is subject to Phosphothreonine; by CDK1. The disordered stretch occupies residues 857 to 884; the sequence is TSHGSVEGRSPSSNDKHVMSRLSSTSSL. Residues Ser861 and Ser866 each carry the phosphoserine modification.

Homodimer. Homooligomer. Found in the centralspindlin complex. Interacts with NR1I3. Interacts (Thr-359 phosphorylated form) with PARD6A; the interaction is observed in cancer cells. Interacts (Thr-359 phosphorylated form) with PRKCI; the interaction is observed in cancer cells. Interacts with PKP4; the interaction is observed at the midbody. Interacts with RACGAP1/CYK4; the interaction is direct, occurs in a microtubule-dependent manner, occurs at anaphase and during cytokinesis, is inhibited in metaphase by phosphorylation of ECT2 on Thr-373 and is stimulated in early anaphase by dephosphorylation of ECT2 probably on Thr-373 through CDK1 activity. Interacts with PLK1; the interaction is stimulated upon its phosphorylation on Thr-444. Interacts with RHOA; the interaction results in allosteric activation of ECT2. Interacts with KIF23, PARD3, PARD6B and PRKCQ. Interacts with NEDD9/HEF1. Phosphorylated by PLK1 in vitro. Hyperphosphorylated during the G2 phase of the cell cycle. Phosphorylation at Thr-373 occurs during the G2/M phase, relieves its auto-inhibition status and stimulates its GEF activity. Phosphorylation at Thr-444 in G2/M phase is required for subsequent binding with PLK1 and Rho exchange activation. Dephosphorylated at the time of cytokinesis. Phosphorylation at Thr-359 is required for its transformation activity in cancer cells. As to expression, expressed in lung epithelial cells (at protein level). Expressed in squamous cell carcinoma, primary non-small cell lung cancer tumors and lung adenocarcinoma.

It localises to the nucleus. Its subcellular location is the cytoplasm. The protein resides in the cytoskeleton. The protein localises to the spindle. It is found in the cleavage furrow. It localises to the midbody. Its subcellular location is the cell junction. The protein resides in the tight junction. The protein localises to the microtubule organizing center. It is found in the centrosome. Autoinhibited by the C-terminal PH domain which folds back and binds to the surface of the DH domain, blocking binding of RHOA to the catalytic center of the DH domain. The 2nd BRCT domain is also involved in inhibition, probably by helping to impede RHOA binding. Allosterically activated by binding of activated GTP-bound RHOA to the PH domain which stimulates the release of PH inhibition and promotes the binding of substrate RHOA to the catalytic center. Binding of phosphorylated RACGAP1 to the N-terminal BRCT domain-containing region also releases autoinhibition. Guanine nucleotide exchange factor (GEF) that catalyzes the exchange of GDP for GTP. Promotes guanine nucleotide exchange on the Rho family members of small GTPases, like RHOA, RHOC, RAC1 and CDC42. Required for signal transduction pathways involved in the regulation of cytokinesis. Component of the centralspindlin complex that serves as a microtubule-dependent and Rho-mediated signaling required for the myosin contractile ring formation during the cell cycle cytokinesis. Regulates the translocation of RHOA from the central spindle to the equatorial region. Plays a role in the control of mitotic spindle assembly; regulates the activation of CDC42 in metaphase for the process of spindle fibers attachment to kinetochores before chromosome congression. Involved in the regulation of epithelial cell polarity; participates in the formation of epithelial tight junctions in a polarity complex PARD3-PARD6-protein kinase PRKCQ-dependent manner. Plays a role in the regulation of neurite outgrowth. Inhibits phenobarbital (PB)-induced NR1I3 nuclear translocation. Stimulates the activity of RAC1 through its association with the oncogenic PARD6A-PRKCI complex in cancer cells, thereby acting to coordinately drive tumor cell proliferation and invasion. Also stimulates genotoxic stress-induced RHOB activity in breast cancer cells leading to their cell death. This is Protein ECT2 from Homo sapiens (Human).